A 137-amino-acid polypeptide reads, in one-letter code: F420H(2)-dependent biliverdin reductase (137 aa).

Coenzyme F420-(gamma-Glu)n contacts are provided by residues 36–41 (HVVAVG), 54–55 (IT), 60–61 (QK), arginine 67, and 78–81 (GARW).

This sequence belongs to the F420H(2)-dependent biliverdin reductase family. As to quaternary structure, homodimer.

It localises to the cell surface. Its subcellular location is the secreted. The catalysed reaction is (4Z,15Z)-bilirubin IXalpha + oxidized coenzyme F420-(gamma-L-Glu)(n) + H(+) = biliverdin IXalpha + reduced coenzyme F420-(gamma-L-Glu)(n). Functionally, catalyzes the F420H(2)-dependent reduction of biliverdin-IXalpha at C10 position, leading to bilirubin-IXalpha, a potent antioxidant. As biliverdin-IXalpha is produced in high amounts in macrophages infected with M.tuberculosis, its reduction by Rv2074 may play a role in protecting mycobacteria against oxidative stress, aiding the persistence of M.tuberculosis infection. This Mycobacterium tuberculosis (strain CDC 1551 / Oshkosh) protein is F420H(2)-dependent biliverdin reductase.